The chain runs to 272 residues: MSTAKSDIKKVTTHQLQEMKNRGEKISMLTAYDYSMAKILDAAGVDVILVGDSASNVMAGHETTLPITLDQMIYHASSVIRAINRALVVVDLPFGSYQGNSSEALRSAIRIMKESGAHAVKMEGGIEIKESVLCIISAGIPVMGHLGLMPQSIYKFGTYVVRAREEEEANKLIADAKILEESGCFGLVLEKIPASLSKTVTHQLQIPTIGIGAGPDVDGQVLVTHDLLGINNEFHPRFLRTYANLQATISTAVTSYIDDVKSKNFPNENECY.

Positions 52 and 91 each coordinate Mg(2+). Residues 52-53, Asp91, and Lys121 contribute to the 3-methyl-2-oxobutanoate site; that span reads DS. Position 123 (Glu123) interacts with Mg(2+). Glu190 acts as the Proton acceptor in catalysis.

This sequence belongs to the PanB family. As to quaternary structure, homodecamer; pentamer of dimers. It depends on Mg(2+) as a cofactor.

It is found in the cytoplasm. It carries out the reaction 3-methyl-2-oxobutanoate + (6R)-5,10-methylene-5,6,7,8-tetrahydrofolate + H2O = 2-dehydropantoate + (6S)-5,6,7,8-tetrahydrofolate. Its pathway is cofactor biosynthesis; (R)-pantothenate biosynthesis; (R)-pantoate from 3-methyl-2-oxobutanoate: step 1/2. Its function is as follows. Catalyzes the reversible reaction in which hydroxymethyl group from 5,10-methylenetetrahydrofolate is transferred onto alpha-ketoisovalerate to form ketopantoate. The chain is 3-methyl-2-oxobutanoate hydroxymethyltransferase from Cytophaga hutchinsonii (strain ATCC 33406 / DSM 1761 / CIP 103989 / NBRC 15051 / NCIMB 9469 / D465).